The following is a 59-amino-acid chain: MAVQKNKPTRSKRGMRRSHDKINIHKFSVDKVSGEIHIRHCLTKSGFYCGKKVLNKKNK.

The interval 1–20 is disordered; that stretch reads MAVQKNKPTRSKRGMRRSHD. Residues 7-19 are compositionally biased toward basic residues; sequence KPTRSKRGMRRSH.

The protein belongs to the bacterial ribosomal protein bL32 family.

The protein is Large ribosomal subunit protein bL32 of Wigglesworthia glossinidia brevipalpis.